Reading from the N-terminus, the 354-residue chain is Thiamine thiazole synthase (354 aa).

Substrate-binding positions include alanine 83, 104 to 105 (EA), glycine 112, and valine 177. Cysteine 210 carries the post-translational modification 2,3-didehydroalanine (Cys). Substrate-binding positions include aspartate 212, histidine 227, methionine 305, and 315 to 317 (RMR).

Belongs to the THI4 family. Homooctamer. The cofactor is Fe cation. In terms of processing, during the catalytic reaction, a sulfide is transferred from Cys-210 to a reaction intermediate, generating a dehydroalanine residue.

The protein localises to the cytoplasm. The protein resides in the nucleus. It carries out the reaction [ADP-thiazole synthase]-L-cysteine + glycine + NAD(+) = [ADP-thiazole synthase]-dehydroalanine + ADP-5-ethyl-4-methylthiazole-2-carboxylate + nicotinamide + 3 H2O + 2 H(+). Involved in biosynthesis of the thiamine precursor thiazole. Catalyzes the conversion of NAD and glycine to adenosine diphosphate 5-(2-hydroxyethyl)-4-methylthiazole-2-carboxylic acid (ADT), an adenylated thiazole intermediate. The reaction includes an iron-dependent sulfide transfer from a conserved cysteine residue of the protein to a thiazole intermediate. The enzyme can only undergo a single turnover, which suggests it is a suicide enzyme. May have additional roles in adaptation to various stress conditions and in DNA damage tolerance. The sequence is that of Thiamine thiazole synthase from Candida albicans (strain WO-1) (Yeast).